Reading from the N-terminus, the 178-residue chain is Small ribosomal subunit protein uS4 (178 aa).

In terms of domain architecture, S4 RNA-binding spans 104–166; it reads RRLQTIVYRK…PNSPMASENH (63 aa). Residues 158–178 form a disordered region; the sequence is NSPMASENHPERTAAVSEENQ.

This sequence belongs to the universal ribosomal protein uS4 family. In terms of assembly, part of the 30S ribosomal subunit. Contacts protein S5. The interaction surface between S4 and S5 is involved in control of translational fidelity.

Its function is as follows. One of the primary rRNA binding proteins, it binds directly to 16S rRNA where it nucleates assembly of the body of the 30S subunit. Functionally, with S5 and S12 plays an important role in translational accuracy. The protein is Small ribosomal subunit protein uS4 of Methanococcus maripaludis (strain C6 / ATCC BAA-1332).